A 180-amino-acid chain; its full sequence is Der GTPase-activating protein YihI (180 aa).

Disordered stretches follow at residues 1-90 and 145-180; these read MSRK…QERR and EPEE…DYKG. The segment covering 23 to 32 has biased composition (basic and acidic residues); sequence NRTESDVEGR. Positions 33–43 are enriched in basic residues; it reads LRKRAKKRKGL. Basic and acidic residues-rich tracts occupy residues 50–68 and 80–90; these read SDAE…DPRL and PVKKQTKQERR. A compositionally biased stretch (acidic residues) spans 165-180; sequence DLLADFDDINFDDYKG.

This sequence belongs to the YihI family. In terms of assembly, interacts with Der.

Its function is as follows. A GTPase-activating protein (GAP) that modifies Der/EngA GTPase function. May play a role in ribosome biogenesis. The sequence is that of Der GTPase-activating protein YihI from Vibrio campbellii (strain ATCC BAA-1116).